The sequence spans 752 residues: Translation initiation factor IF-2 (752 aa).

Over residues 148 to 159 (KKVKDKNKKEEP) the composition is skewed to basic and acidic residues. A disordered region spans residues 148-170 (KKVKDKNKKEEPAVTPSTAPRKK). Residues 250–419 (PRPPIVTVMG…ALQAEIMELK (170 aa)) enclose the tr-type G domain. The segment at 259–266 (GHVDHGKT) is G1. 259 to 266 (GHVDHGKT) lines the GTP pocket. The interval 284-288 (GITQH) is G2. The interval 305-308 (DTPG) is G3. GTP is bound by residues 305 to 309 (DTPGH) and 359 to 362 (NKID). The segment at 359-362 (NKID) is G4. A G5 region spans residues 395-397 (SAK).

This sequence belongs to the TRAFAC class translation factor GTPase superfamily. Classic translation factor GTPase family. IF-2 subfamily.

It is found in the cytoplasm. Functionally, one of the essential components for the initiation of protein synthesis. Protects formylmethionyl-tRNA from spontaneous hydrolysis and promotes its binding to the 30S ribosomal subunits. Also involved in the hydrolysis of GTP during the formation of the 70S ribosomal complex. This chain is Translation initiation factor IF-2, found in Thermodesulfovibrio yellowstonii (strain ATCC 51303 / DSM 11347 / YP87).